The following is a 286-amino-acid chain: Putative chaperone BssE (286 aa).

ATP-binding positions include 47–54 (GKQGCGKS) and 108–115 (GCVIHLEE).

The protein belongs to the CbbQ/NirQ/NorQ/GpvN family.

Its function is as follows. May have a role in assembly and/or activation of benzylsuccinate synthase. This chain is Putative chaperone BssE (bssE), found in Thauera aromatica.